We begin with the raw amino-acid sequence, 47 residues long: Delta-halcutoxin-Hcg1a (47 aa).

3 cysteine pairs are disulfide-bonded: C3-C43, C5-C33, and C26-C44.

The protein belongs to the sea anemone sodium channel inhibitory toxin family. Type II subfamily.

The protein localises to the secreted. The protein resides in the nematocyst. In terms of biological role, is potently lethal to crabs, although it showed neither lethal activity in mice nor hemolytic activity. May bind to voltage-gated sodium channels (Nav), thereby delaying their inactivation during signal transduction. The protein is Delta-halcutoxin-Hcg1a of Isohalcurias carlgreni (Sea anemone).